The following is a 203-amino-acid chain: Small ribosomal subunit protein uS4 (203 aa).

Positions 93-154 constitute an S4 RNA-binding domain; the sequence is RRLDNVVYRC…KSRNLDAVAD (62 aa).

It belongs to the universal ribosomal protein uS4 family. In terms of assembly, part of the 30S ribosomal subunit. Contacts protein S5. The interaction surface between S4 and S5 is involved in control of translational fidelity.

Functionally, one of the primary rRNA binding proteins, it binds directly to 16S rRNA where it nucleates assembly of the body of the 30S subunit. In terms of biological role, with S5 and S12 plays an important role in translational accuracy. This is Small ribosomal subunit protein uS4 from Chlorobaculum tepidum (strain ATCC 49652 / DSM 12025 / NBRC 103806 / TLS) (Chlorobium tepidum).